Reading from the N-terminus, the 301-residue chain is Syntaxin-17 (301 aa).

Serine 2 bears the N-acetylserine mark. Residues 2–227 (SEDEEKVKLR…KNLQKAAKYK (226 aa)) lie on the Cytoplasmic side of the membrane. An N6-acetyllysine modification is found at lysine 41. The stretch at 49–128 (DKLHEEHINA…QVKNEEALLQ (80 aa)) forms a coiled coil. Tyrosine 156 carries the phosphotyrosine; by ABL1 modification. The region spanning 161 to 223 (IPRDQNAAES…EEGTKNLQKA (63 aa)) is the t-SNARE coiled-coil homology domain. The helical transmembrane segment at 228–248 (LAALPVAGAVIGGVVGGPIGL) threads the bilayer. The segment at 228–274 (LAALPVAGAVIGGVVGGPIGLLAGFKVAGIAAALGGGVLGFTGGKLI) is necessary and sufficient for localization to autophagosome. The Lumenal portion of the chain corresponds to 249–253 (LAGFK). The helical transmembrane segment at 254–274 (VAGIAAALGGGVLGFTGGKLI) threads the bilayer. The interval 273 to 301 (LIQRRKQKMMEKLTSSCPDLPSQSDKKCS) is required for interaction with COPB1, TMED9 and TMED10. Residues 275-301 (QRRKQKMMEKLTSSCPDLPSQSDKKCS) are Cytoplasmic-facing. A Phosphoserine modification is found at serine 288. The Endoplasmic reticulum retention signal signature appears at 298–301 (KKCS).

Belongs to the syntaxin family. Forms a SNARE complex composed of VAMP8, SNAP29 and STX17 involved in fusion of autophagosome with lysosome. May interact with VAMP7. May interact with VTI1B. Probably interacts with BET1, SCFD1 and SEC22B. Interacts with PTPN2 and ABL1; involved in STX17 phosphorylation. Interacts with COPB1. Interacts with TMED9 and TMED10; the interaction is direct. Interacts with RUBCNL/PACER; promoting targeting of RUBCNL/PACER to autophagosome. Interacts with VAMP8, SNAP29, VPS39 and VPS41; these interactions are increased in the absence of TMEM39A. Interacts with IRGM; promoting STX17 recruitment to autophagosomes. Interacts with ATG8 proteins GABARAP and MAP1LC3B. Interacts with RNF115; this interaction enhances STX17 stability which in turn promotes autophagosome maturation. Interacts with RAB39A (GTP-bound); the interaction promotes autophagosome-lysosome membrane fusion driven by STX17-SNAP29-VAMP8. Interacts with RAB39B; the interaction may promote a different fonction in autophagy as compared with RAB39A. Post-translationally, phosphorylated at Tyr-156 probably by ABL1. Dephosphorylation by PTPN2; regulates exit from the endoplasmic reticulum. As to expression, detected in all tissues examined with higher expression in steroidogenic tissues including testis and adrenal gland (at protein level). Highly expressed in liver and testis. Also found in brain, heart, kidney, lung, placenta, skeletal muscle and spleen.

It is found in the endoplasmic reticulum membrane. Its subcellular location is the smooth endoplasmic reticulum membrane. The protein localises to the endoplasmic reticulum-Golgi intermediate compartment membrane. It localises to the cytoplasmic vesicle. The protein resides in the autophagosome membrane. It is found in the COPII-coated vesicle membrane. Its subcellular location is the cytoplasm. The protein localises to the cytosol. It localises to the mitochondrion membrane. The protein resides in the autolysosome membrane. SNAREs, soluble N-ethylmaleimide-sensitive factor-attachment protein receptors, are essential proteins for fusion of cellular membranes. SNAREs localized on opposing membranes assemble to form a trans-SNARE complex, an extended, parallel four alpha-helical bundle that drives membrane fusion. STX17 is a SNARE of the autophagosome involved in autophagy through the direct control of autophagosome membrane fusion with the lysosome membrane. May also play a role in the early secretory pathway where it may maintain the architecture of the endoplasmic reticulum-Golgi intermediate compartment/ERGIC and Golgi and/or regulate transport between the endoplasmic reticulum, the ERGIC and the Golgi. This chain is Syntaxin-17, found in Rattus norvegicus (Rat).